The sequence spans 258 residues: Chymotrypsin-2 (258 aa).

Positions 1-17 (MLRKVFAVVSVLLVVSA) are cleaved as a signal peptide. Positions 18 to 32 (AKVTKLVLDDHYVNR) are cleaved as a propeptide — activation peptide. The Peptidase S1 domain maps to 33 to 255 (VVGGEVAKNG…YHEWVRTTMA (223 aa)). Cysteine 59 and cysteine 75 are disulfide-bonded. Residues histidine 74 and aspartate 119 each act as charge relay system in the active site. Intrachain disulfides connect cysteine 182/cysteine 198 and cysteine 208/cysteine 232. The active-site Charge relay system is serine 212.

It belongs to the peptidase S1 family. As to expression, after blood feeding, expression is induced in the midgut epithelium, followed by secretion into the midgut lumen.

Its subcellular location is the secreted. The catalysed reaction is Preferential cleavage: Tyr-|-Xaa, Trp-|-Xaa, Phe-|-Xaa, Leu-|-Xaa.. This Anopheles gambiae (African malaria mosquito) protein is Chymotrypsin-2 (CHYM2).